Consider the following 499-residue polypeptide: Glycerol kinase (499 aa).

Thr-13 lines the ADP pocket. ATP-binding residues include Thr-13, Thr-14, and Ser-15. Thr-13 is a sn-glycerol 3-phosphate binding site. Arg-17 contributes to the ADP binding site. Sn-glycerol 3-phosphate contacts are provided by Arg-83, Glu-84, Tyr-135, and Asp-245. 5 residues coordinate glycerol: Arg-83, Glu-84, Tyr-135, Asp-245, and Gln-246. ADP contacts are provided by Thr-267 and Gly-310. Residues Thr-267, Gly-310, Gln-314, and Ala-411 each coordinate ATP. Residues Ala-411 and Asn-415 each contribute to the ADP site.

This sequence belongs to the FGGY kinase family.

The enzyme catalyses glycerol + ATP = sn-glycerol 3-phosphate + ADP + H(+). Its pathway is polyol metabolism; glycerol degradation via glycerol kinase pathway; sn-glycerol 3-phosphate from glycerol: step 1/1. With respect to regulation, inhibited by fructose 1,6-bisphosphate (FBP). Functionally, key enzyme in the regulation of glycerol uptake and metabolism. Catalyzes the phosphorylation of glycerol to yield sn-glycerol 3-phosphate. This is Glycerol kinase from Xylella fastidiosa (strain M23).